A 430-amino-acid polypeptide reads, in one-letter code: Maintenance of mitochondrial morphology protein 1 (430 aa).

The Lumenal segment spans residues 1–70 (MSQGLIETTT…NGNTWSFTQG (70 aa)). Residues 71-91 (LVIGQISVIFIIIVFVKFFVF) traverse the membrane as a helical segment. The Cytoplasmic portion of the chain corresponds to 92–430 (ADSSSHIPTK…TPGEFVNSNI (339 aa)). The region spanning 159–387 (ASESLDWFNV…EPRFQVVRLP (229 aa)) is the SMP-LTD domain. The segment at 305 to 326 (GYSKENGSADSASDNDEDEDDG) is disordered. The span at 317–326 (SDNDEDEDDG) shows a compositional bias: acidic residues.

This sequence belongs to the MMM1 family. As to quaternary structure, homodimer. Component of the ER-mitochondria encounter structure (ERMES) or MDM complex, composed of MMM1, MDM10, MDM12 and MDM34. An MMM1 homodimer associates with one molecule of MDM12 on each side in a pairwise head-to-tail manner, and the SMP-LTD domains of MMM1 and MDM12 generate a continuous hydrophobic tunnel for phospholipid trafficking.

Its subcellular location is the endoplasmic reticulum membrane. Component of the ERMES/MDM complex, which serves as a molecular tether to connect the endoplasmic reticulum (ER) and mitochondria. Components of this complex are involved in the control of mitochondrial shape and protein biogenesis, and function in nonvesicular lipid trafficking between the ER and mitochondria. The MDM12-MMM1 subcomplex functions in the major beta-barrel assembly pathway that is responsible for biogenesis of all outer membrane beta-barrel proteins, and acts in a late step after the SAM complex. The MDM10-MDM12-MMM1 subcomplex further acts in the TOM40-specific pathway after the action of the MDM12-MMM1 complex. Essential for establishing and maintaining the structure of mitochondria and maintenance of mtDNA nucleoids. This is Maintenance of mitochondrial morphology protein 1 from Candida dubliniensis (strain CD36 / ATCC MYA-646 / CBS 7987 / NCPF 3949 / NRRL Y-17841) (Yeast).